The sequence spans 559 residues: MTQNINKIYLPSPNKYLSREDFLNYTNLMREIANFDPSTKKWYINEYKISRLTKDELKGIIDQIAEYIGNSIYNILSNYIKDDNNIINAYIKGNYIYIRDNLEKYKNLLTYKIKTFDYKEGKYTEEEILLAWQKSYGFVTLRGLYWKLKNIANFDLKPFTNLRFYDIQLKNFEMRNYQINSIKSWVSDVNVIGNGIIKAPTGSGKSVIAILSALEILKNKNNAKIVYAVNSTTLLKQFQNFAKKEDLPFVLVSGEIDEIKKGERSDFIALSISYYYSKKKRNEHEKLKELVTNADLVIIDEAHHTPANIVKSLLLDSPNSIRLGLSATPIREDGKELEIMGLLGKISFTIDYTELVRNRYLVPIEYIRYIPEIPKKLKLKIQDLDDNKDPENFAKYYSSLLRSFEHSPNTNKQIISKIKQLNQYPCLVIVRRIAIAKKLAEIMRENGIIADWVSSKTKLEERMEKIEALKNEKLQVLISTSLADEGLDIPNLRLVVLLTQGKSRIKLIQRIGRVMRVSQNKRKGYILDVIYNHDLFIKQSVKKMNFIENEYNGIITIHY.

One can recognise a Helicase ATP-binding domain in the interval 186–347 (VSDVNVIGNG…EIMGLLGKIS (162 aa)). 199–206 (APTGSGKS) is a binding site for ATP. Residues 300–303 (DEAH) carry the DEAH box motif. A Helicase C-terminal domain is found at 410–552 (TNKQIISKIK…KMNFIENEYN (143 aa)).

The sequence is that of Putative helicase 22 (SIFV0022) from Sulfolobus islandicus filamentous virus (isolate Iceland/Hveragerdi) (SIFV).